The sequence spans 170 residues: Cathelicidin antimicrobial peptide (170 aa).

Positions 1–30 (MKTQRDGPSLGRWSLVLLLLGLTMPLAVIA) are cleaved as a signal peptide. Positions 31–131 (RVLSYQEAVL…DISCDKDKRK (101 aa)) are cleaved as a propeptide — cathelin-like domain (CLD). Disulfide bonds link Cys86–Cys97 and Cys108–Cys125. An active core region spans residues 150–162 (LKNIGQRIKDFFG).

It belongs to the cathelicidin family. Monomer, homodimer or homotrimer (in vitro). Oligomerizes as tetra- or hexamer in solution (in vitro). Post-translationally, proteolytically cleaved by proteinase PRTN3 into antibacterial peptide LL-37. Proteolytically cleaved by cathepsin CTSG and neutrophil elastase ELANE. In terms of processing, resistant to proteolytic degradation in solution, and when bound to both zwitterionic (mimicking mammalian membranes) and negatively charged membranes (mimicking bacterial membranes). After secretion onto the skin surface, the CAMP gene product is processed by a serine protease-dependent mechanism into multiple novel antimicrobial peptides distinct from and shorter than cathelicidin LL-37. These peptides show enhanced antimicrobial action, acquiring the ability to kill skin pathogens such as S.aureus, E.coli and C.albicans. These peptides have lost the ability to stimulate CXCL8/IL8 release from keratinocytes. The peptides act synergistically, killing bacteria at lower concentrations when present together, and maintain activity at increased salt condition.

It is found in the secreted. The protein resides in the vesicle. Antimicrobial protein that is an integral component of the innate immune system. Binds to bacterial lipopolysaccharides (LPS). Acts via neutrophil N-formyl peptide receptors to enhance the release of CXCL2. Postsecretory processing generates multiple cathelicidin antimicrobial peptides with various lengths which act as a topical antimicrobial defense in sweat on skin. The unprocessed precursor form, cathelicidin antimicrobial peptide, inhibits the growth of Gram-negative E.coli and E.aerogenes with efficiencies comparable to that of the mature peptide LL-37 (in vitro). Its function is as follows. Antimicrobial peptide that is an integral component of the innate immune system. Binds to bacterial lipopolysaccharides (LPS). Causes membrane permeabilization by forming transmembrane pores (in vitro). Causes lysis of E.coli. Exhibits antimicrobial activity against Gram-negative bacteria such as P.aeruginosa, S.typhimurium, E.aerogenes, E.coli and P.syringae, Gram-positive bacteria such as L.monocytogenes, S.epidermidis, S.pyogenes and S.aureus, as well as vancomycin-resistant enterococci (in vitro). Exhibits antimicrobial activity against methicillin-resistant S.aureus, P.mirabilis, and C.albicans in low-salt media, but not in media containing 100 mM NaCl (in vitro). Forms chiral supramolecular assemblies with quinolone signal (PQS) molecules of P.aeruginosa, which may lead to interference of bacterial quorum signaling and perturbance of bacterial biofilm formation. May form supramolecular fiber-like assemblies on bacterial membranes. Induces cytokine and chemokine producation as well as TNF/TNFA and CSF2/GMCSF production in normal human keratinocytes. Exhibits hemolytic activity against red blood cells. In terms of biological role, exhibits antimicrobial activity against E.coli and B.megaterium (in vitro). The chain is Cathelicidin antimicrobial peptide from Ateles fusciceps robustus (Colombian black-faced spider monkey).